A 246-amino-acid chain; its full sequence is 1-(5-phosphoribosyl)-5-[(5-phosphoribosylamino)methylideneamino] imidazole-4-carboxamide isomerase (246 aa).

The Proton acceptor role is filled by Asp-8. Residue Asp-131 is the Proton donor of the active site.

This sequence belongs to the HisA/HisF family.

It is found in the cytoplasm. The catalysed reaction is 1-(5-phospho-beta-D-ribosyl)-5-[(5-phospho-beta-D-ribosylamino)methylideneamino]imidazole-4-carboxamide = 5-[(5-phospho-1-deoxy-D-ribulos-1-ylimino)methylamino]-1-(5-phospho-beta-D-ribosyl)imidazole-4-carboxamide. The protein operates within amino-acid biosynthesis; L-histidine biosynthesis; L-histidine from 5-phospho-alpha-D-ribose 1-diphosphate: step 4/9. The protein is 1-(5-phosphoribosyl)-5-[(5-phosphoribosylamino)methylideneamino] imidazole-4-carboxamide isomerase of Bordetella avium (strain 197N).